A 368-amino-acid polypeptide reads, in one-letter code: Anaphase-promoting complex subunit MND2 (368 aa).

Disordered stretches follow at residues 140-167 and 286-336; these read AQNA…NGSI and RNPY…GITP. The span at 149–162 shows a compositional bias: basic and acidic residues; the sequence is EDFRQHDSREEDPR. Ser293 carries the post-translational modification Phosphoserine.

It belongs to the APC15 family. The APC/C is composed of at least 13 subunits that stay tightly associated throughout the cell cycle: APC1, APC2, APC4, APC5, APC9, APC11, CDC16, CDC23, CDC26, CDC27, DOC1, MND2 and SWM1. MND2 interacts directly with APC1, APC5 and CDC23.

The protein operates within protein modification; protein ubiquitination. In terms of biological role, component of the anaphase promoting complex/cyclosome (APC/C), a cell cycle-regulated E3 ubiquitin-protein ligase complex that controls progression through mitosis and the G1 phase of the cell cycle. The APC/C is thought to confer substrate specificity and, in the presence of ubiquitin-conjugating E2 enzymes, it catalyzes the formation of protein-ubiquitin conjugates that are subsequently degraded by the 26S proteasome. In early mitosis, the APC/C is activated by CDC20 and targets securin PDS1, the B-type cyclin CLB5, and other anaphase inhibitory proteins for proteolysis, thereby triggering the separation of sister chromatids at the metaphase-to-anaphase transition. In late mitosis and in G1, degradation of CLB5 allows activation of the APC/C by CDH1, which is needed to destroy CDC20 and the B-type cyclin CLB2 to allow exit from mitosis and creating the low CDK state necessary for cytokinesis and for reforming prereplicative complexes in G1 prior to another round of replication. The chain is Anaphase-promoting complex subunit MND2 (MND2) from Saccharomyces cerevisiae (strain ATCC 204508 / S288c) (Baker's yeast).